The sequence spans 365 residues: Fructose-1,6-bisphosphatase class 1 2 (365 aa).

Glu100, Asp122, Leu124, and Asp125 together coordinate Mg(2+). Substrate contacts are provided by residues Asp125–Ser128 and Asn221. Glu293 is a Mg(2+) binding site.

It belongs to the FBPase class 1 family. As to quaternary structure, homotetramer. Requires Mg(2+) as cofactor.

Its subcellular location is the cytoplasm. The catalysed reaction is beta-D-fructose 1,6-bisphosphate + H2O = beta-D-fructose 6-phosphate + phosphate. Its pathway is carbohydrate biosynthesis; gluconeogenesis. The polypeptide is Fructose-1,6-bisphosphatase class 1 2 (Cupriavidus metallidurans (strain ATCC 43123 / DSM 2839 / NBRC 102507 / CH34) (Ralstonia metallidurans)).